The chain runs to 366 residues: Leucine dehydrogenase (366 aa).

The active site involves Lys-82. 182–188 is a binding site for NAD(+); it reads GVGNVAY.

It belongs to the Glu/Leu/Phe/Val dehydrogenases family.

The catalysed reaction is L-leucine + NAD(+) + H2O = 4-methyl-2-oxopentanoate + NH4(+) + NADH + H(+). It functions in the pathway amino-acid degradation; L-leucine degradation; 4-methyl-2-oxopentanoate from L-leucine (dehydrogenase route): step 1/1. Its function is as follows. Catalyzes the reversible deamination of L-leucine to 4-methyl-2-oxopentanoate. This is Leucine dehydrogenase (ldh) from Bacillus cereus.